Here is a 719-residue protein sequence, read N- to C-terminus: Homeobox protein SIX5 (719 aa).

2 stretches are compositionally biased toward low complexity: residues 1-22 (MATS…AAAT) and 31-65 (QLLQ…GPGS). Disordered stretches follow at residues 1–73 (MATS…VTEV) and 241–287 (WFKN…VASM). A DNA-binding region (homeobox) is located at residues 194–253 (GEETVYCFKERSRAALKACYRGNRYPTPDEKRRLATLTGLSLTQVSNWFKNRRQRDRTGT). Basic and acidic residues predominate over residues 272-282 (ESSRSPEDLER).

It belongs to the SIX/Sine oculis homeobox family. In terms of assembly, probably binds DNA dimer. Interacts with EYA3, and probably EYA1 and EYA2.

The protein localises to the nucleus. Its function is as follows. Transcription factor that is thought to be involved in regulation of organogenesis. May be involved in determination and maintenance of retina formation. Binds a 5'-GGTGTCAG-3' motif present in the ARE regulatory element of ATP1A1. Binds a 5'-TCA[AG][AG]TTNC-3' motif present in the MEF3 element in the myogenin promoter, and in the IGFBP5 promoter. Thought to be regulated by association with Dach and Eya proteins, and seems to be coactivated by EYA1, EYA2 and EYA3. This chain is Homeobox protein SIX5 (Six5), found in Mus musculus (Mouse).